Consider the following 431-residue polypeptide: Glutamate-1-semialdehyde 2,1-aminomutase (431 aa).

Lys269 carries the post-translational modification N6-(pyridoxal phosphate)lysine.

It belongs to the class-III pyridoxal-phosphate-dependent aminotransferase family. HemL subfamily. Homodimer. Requires pyridoxal 5'-phosphate as cofactor.

It localises to the cytoplasm. The enzyme catalyses (S)-4-amino-5-oxopentanoate = 5-aminolevulinate. It functions in the pathway porphyrin-containing compound metabolism; protoporphyrin-IX biosynthesis; 5-aminolevulinate from L-glutamyl-tRNA(Glu): step 2/2. This Francisella tularensis subsp. mediasiatica (strain FSC147) protein is Glutamate-1-semialdehyde 2,1-aminomutase.